We begin with the raw amino-acid sequence, 236 residues long: Biosynthetic peptidoglycan transglycosylase (236 aa).

A helical membrane pass occupies residues 12 to 31 (ALLWFAAGSVLVVLVLRWVP).

It belongs to the glycosyltransferase 51 family.

The protein resides in the cell inner membrane. The catalysed reaction is [GlcNAc-(1-&gt;4)-Mur2Ac(oyl-L-Ala-gamma-D-Glu-L-Lys-D-Ala-D-Ala)](n)-di-trans,octa-cis-undecaprenyl diphosphate + beta-D-GlcNAc-(1-&gt;4)-Mur2Ac(oyl-L-Ala-gamma-D-Glu-L-Lys-D-Ala-D-Ala)-di-trans,octa-cis-undecaprenyl diphosphate = [GlcNAc-(1-&gt;4)-Mur2Ac(oyl-L-Ala-gamma-D-Glu-L-Lys-D-Ala-D-Ala)](n+1)-di-trans,octa-cis-undecaprenyl diphosphate + di-trans,octa-cis-undecaprenyl diphosphate + H(+). It functions in the pathway cell wall biogenesis; peptidoglycan biosynthesis. In terms of biological role, peptidoglycan polymerase that catalyzes glycan chain elongation from lipid-linked precursors. This chain is Biosynthetic peptidoglycan transglycosylase, found in Pseudomonas syringae pv. syringae (strain B728a).